The following is an 823-amino-acid chain: Pentatricopeptide repeat-containing protein At4g33990 (823 aa).

16 PPR repeats span residues Asn-85 to Arg-115, Asp-116 to Pro-151, Asp-152 to Trp-183, Asp-184 to Arg-214, Asp-215 to Thr-249, Ser-252 to Ser-280, Glu-281 to Arg-311, Asp-312 to Pro-346, Asp-347 to Leu-381, Asp-383 to Thr-413, Asp-414 to Ala-448, Asn-450 to Leu-484, Asp-485 to Val-515, Asn-516 to Pro-550, Asp-551 to Asp-581, and Ser-587 to Gln-617. The type E motif stretch occupies residues Ile-622 to Asp-697. Residues Asn-698–Lys-728 form a type E(+) motif region. Positions Met-729–Trp-823 are type DYW motif.

This sequence belongs to the PPR family. PCMP-H subfamily.

The sequence is that of Pentatricopeptide repeat-containing protein At4g33990 (EMB2758) from Arabidopsis thaliana (Mouse-ear cress).